The following is a 68-amino-acid chain: Riparin-1.5 amide (68 aa).

An N-terminal signal peptide occupies residues 1–15 (MKIIVVLAVLMLVSA). Positions 16-41 (QVCLVSAAEMGHSSDNELSSRDLVKR) are excised as a propeptide. Cysteine 47 and cysteine 53 are joined by a disulfide. Cysteine 53 carries the post-translational modification Cysteine amide. A propeptide spanning residues 57-68 (SIESSEGANGGE) is cleaved from the precursor.

In terms of tissue distribution, expressed by the skin glands.

It localises to the secreted. This chain is Riparin-1.5 amide, found in Crinia riparia (Streambank froglet).